We begin with the raw amino-acid sequence, 592 residues long: uncharacterized protein (592 aa).

This is an uncharacterized protein from Saccharolobus solfataricus (strain ATCC 35092 / DSM 1617 / JCM 11322 / P2) (Sulfolobus solfataricus).